Here is a 307-residue protein sequence, read N- to C-terminus: 4-diphosphocytidyl-2-C-methyl-D-erythritol kinase (307 aa).

The active site involves K16. 101–111 (PVAGGMAGGSA) serves as a coordination point for ATP. D143 is a catalytic residue.

This sequence belongs to the GHMP kinase family. IspE subfamily.

The catalysed reaction is 4-CDP-2-C-methyl-D-erythritol + ATP = 4-CDP-2-C-methyl-D-erythritol 2-phosphate + ADP + H(+). It participates in isoprenoid biosynthesis; isopentenyl diphosphate biosynthesis via DXP pathway; isopentenyl diphosphate from 1-deoxy-D-xylulose 5-phosphate: step 3/6. Catalyzes the phosphorylation of the position 2 hydroxy group of 4-diphosphocytidyl-2C-methyl-D-erythritol. The polypeptide is 4-diphosphocytidyl-2-C-methyl-D-erythritol kinase (Nocardia farcinica (strain IFM 10152)).